We begin with the raw amino-acid sequence, 515 residues long: MDSAVPLFQMEGISKRYGGVRALEKAELVVTSGSIHAILGENGAGKSTLIKVMAGVVAPDEGRMTLDGREVTFLSPAAANQAGIVCIFQELSLVPDLSVADNIVISDPPKRFGMIDRKAQRRVAEEALARAGAADIHPLALVKDLPLSRRQMVEIAKALARKPRILILDEATSALTAADVSKIFGVLKRLRSEGLALLYISHRMNEIAELADQCTVFRNGRNVASYKAGSKSDNEVVELMIGREYSHIFPAKPAAVPATAAPRLEARKLSWTDRLHDISLTVRAGEVVGLGGLDGQGQRELLLAFFGVLRGLSGEVLIDGKPVAIGSPAKARQDGIGMALIPEDRKTEGLMLPMTVRENLSFAALDRLSKGGIIDRAAEQRLIDDMVGLLAIKTAGLDIPVGALSGGNQQKVVIAKWLMRQPRIILLNDPTRGIDVGTKQELYQLMRKLADAGAAILFYSTDYDELIGCCDRVLVLYDGALKRELVGSEITERALIASALNIHGEESPVGLGASA.

2 ABC transporter domains span residues 8 to 244 (FQME…IGRE) and 256 to 503 (VPAT…LNIH). Residue 40–47 (GENGAGKS) participates in ATP binding.

The protein belongs to the ABC transporter superfamily. Ribose importer (TC 3.A.1.2.1) family. In terms of assembly, the complex is composed of an ATP-binding protein (RbsA), two transmembrane proteins (RbsC) and a solute-binding protein (RbsB).

The protein localises to the cell inner membrane. The enzyme catalyses D-ribose(out) + ATP + H2O = D-ribose(in) + ADP + phosphate + H(+). In terms of biological role, part of the ABC transporter complex RbsABC involved in ribose import. Responsible for energy coupling to the transport system. The chain is Ribose import ATP-binding protein RbsA 1 from Mesorhizobium japonicum (strain LMG 29417 / CECT 9101 / MAFF 303099) (Mesorhizobium loti (strain MAFF 303099)).